A 360-amino-acid chain; its full sequence is DNA replication and repair protein RecF (360 aa).

30 to 37 (GDNAQGKT) contacts ATP.

It belongs to the RecF family.

The protein localises to the cytoplasm. Its function is as follows. The RecF protein is involved in DNA metabolism; it is required for DNA replication and normal SOS inducibility. RecF binds preferentially to single-stranded, linear DNA. It also seems to bind ATP. This is DNA replication and repair protein RecF from Lachnoclostridium phytofermentans (strain ATCC 700394 / DSM 18823 / ISDg) (Clostridium phytofermentans).